A 467-amino-acid polypeptide reads, in one-letter code: Glycosyl hydrolase family 109 protein 1 (467 aa).

The signal sequence occupies residues 1–22; sequence MKKLLLNTLIGLALLTCQTSFA. NAD(+) contacts are provided by residues 66 to 67, aspartate 88, 137 to 140, 157 to 158, and asparagine 186; these read MR, WKHH, and EV. Substrate is bound by residues tyrosine 215, arginine 231, 243–246, and tyrosine 321; that span reads YATH. Tyrosine 243 provides a ligand contact to NAD(+).

This sequence belongs to the Gfo/Idh/MocA family. Glycosyl hydrolase 109 subfamily. Requires NAD(+) as cofactor.

Functionally, glycosidase. This chain is Glycosyl hydrolase family 109 protein 1, found in Bacteroides thetaiotaomicron (strain ATCC 29148 / DSM 2079 / JCM 5827 / CCUG 10774 / NCTC 10582 / VPI-5482 / E50).